Here is a 1669-residue protein sequence, read N- to C-terminus: Collagen alpha-1(IV) chain (1669 aa).

The N-terminal stretch at 1–27 (MGPRLGVWLLLLLAALLLHEESSRAAA) is a signal peptide. Residues 28-172 (KGGCAGSGCG…LGHIPGTLLK (145 aa)) constitute a propeptide, N-terminal propeptide (7S domain). The interval 50-1445 (ERGLPGLQGV…PPGTPSVDHG (1396 aa)) is disordered. Residues 173 to 1440 (GERGYPGQPG…PGSMGPPGTP (1268 aa)) form a triple-helical region region. A compositionally biased stretch (pro residues) spans 196–214 (VGPPGFTGPPGPPGPPGPP). 3-hydroxyproline is present on residues proline 204, proline 207, and proline 210. 2 stretches are compositionally biased toward basic and acidic residues: residues 254–263 (TAMRGEKGQK) and 289–298 (PGKDGEKGEK). Residues 347-356 (GYPGGPGAKG) show a composition bias toward gly residues. Over residues 357–366 (ETGPKGFPGI) the composition is skewed to low complexity. The span at 367–376 (PGQPGPPGFP) shows a compositional bias: pro residues. Over residues 396–412 (PGLPGVSLPGPSGRDGL) the composition is skewed to low complexity. Pro residues-rich tracts occupy residues 413–424 (PGPPGPPGPPGQ) and 436–448 (PGPP…PGIP). The segment covering 485–494 (PGEIGFPGQP) has biased composition (low complexity). 2 stretches are compositionally biased toward basic and acidic residues: residues 497–508 (KGDRGLPGRDGL) and 535–545 (FDIRLKGDKGD). The span at 586–595 (GPPGGVGFPG) shows a compositional bias: gly residues. Residues proline 587 and proline 602 each carry the 3-hydroxyproline modification. Proline 603 carries the 4-hydroxyproline modification. Residue proline 605 is modified to 3-hydroxyproline. Proline 606, proline 623, proline 626, proline 629, and proline 632 each carry 4-hydroxyproline. At proline 647 the chain carries 3-hydroxyproline. Composition is skewed to gly residues over residues 758–767 (GNVGGPGIPG) and 797–817 (GVPG…GPPG). Over residues 847 to 871 (SQGLPGLTGQSGLPGLPGQQGTPGQ) the composition is skewed to low complexity. Positions 937-955 (SMDKVDMGSMKGEKGDQGE) are enriched in basic and acidic residues. Positions 1011-1020 (GSAGGMGLPG) are enriched in gly residues. Composition is skewed to low complexity over residues 1030–1040 (IPGPQGIPGLP), 1101–1114 (SPGS…PGLP), and 1193–1212 (FPGL…QGFM). Proline 1214 carries the post-translational modification 3-hydroxyproline. Residues 1247–1258 (PGRPGPMGPPGL) show a composition bias toward pro residues. The span at 1290–1299 (GMPGIGGSPG) shows a compositional bias: gly residues. The span at 1413–1428 (FGPPGPRGFPGPPGPD) shows a compositional bias: pro residues. A 3-hydroxyproline modification is found at proline 1424. Residues 1445-1669 (GFLVTRHSQT…SRCQVCMRRT (225 aa)) form the Collagen IV NC1 domain. 6 disulfides stabilise this stretch: cysteine 1460/cysteine 1551, cysteine 1493/cysteine 1548, cysteine 1505/cysteine 1511, cysteine 1570/cysteine 1665, cysteine 1604/cysteine 1662, and cysteine 1616/cysteine 1622. Methionine 1533 participates in a covalent cross-link: S-Lysyl-methionine sulfilimine (Met-Lys) (interchain with K-1651). Residue lysine 1651 forms an S-Lysyl-methionine sulfilimine (Lys-Met) (interchain with M-1533) linkage.

The protein belongs to the type IV collagen family. In terms of assembly, there are six type IV collagen isoforms, alpha 1(IV)-alpha 6(IV), each of which can form a triple helix structure with 2 other chains to generate type IV collagen network. Interacts with EFEMP2. In terms of processing, lysines at the third position of the tripeptide repeating unit (G-X-Y) are hydroxylated in all cases. The modified lysines can be O-glycosylated. Contains 4-hydroxyproline. Prolines at the third position of the tripeptide repeating unit (G-X-Y) are hydroxylated in some or all of the chains. Post-translationally, contains 3-hydroxyproline. This modification occurs on the first proline residue in the sequence motif Gly-Pro-Hyp, where Hyp is 4-hydroxyproline. In terms of processing, type IV collagens contain numerous cysteine residues which are involved in inter- and intramolecular disulfide bonding. 12 of these, located in the NC1 domain, are conserved in all known type IV collagens. The trimeric structure of the NC1 domains is stabilized by covalent bonds (sulfilimine cross-links) between Lys and Met residues. These cross-links are important for the mechanical stability of the basement membrane. Sulfilimine cross-link is catalyzed by PXDN. Post-translationally, proteolytic processing produces the C-terminal NC1 peptide, arresten.

It is found in the secreted. It localises to the extracellular space. The protein localises to the extracellular matrix. The protein resides in the basement membrane. Type IV collagen is the major structural component of glomerular basement membranes (GBM), forming a 'chicken-wire' meshwork together with laminins, proteoglycans and entactin/nidogen. Its function is as follows. Arresten, comprising the C-terminal NC1 domain, inhibits angiogenesis and tumor formation. The C-terminal half is found to possess the anti-angiogenic activity. Specifically inhibits endothelial cell proliferation, migration and tube formation. The chain is Collagen alpha-1(IV) chain from Bos taurus (Bovine).